Consider the following 281-residue polypeptide: Large ribosomal subunit protein uL2 (281 aa).

The segment at 224–281 (RGSAMNPNDHPHGGGEGHQPIGRKSPMTPWGKKALGVKTRKTKKASNQFIIRRRKESK) is disordered.

The protein belongs to the universal ribosomal protein uL2 family. As to quaternary structure, part of the 50S ribosomal subunit. Forms a bridge to the 30S subunit in the 70S ribosome.

Its function is as follows. One of the primary rRNA binding proteins. Required for association of the 30S and 50S subunits to form the 70S ribosome, for tRNA binding and peptide bond formation. It has been suggested to have peptidyltransferase activity; this is somewhat controversial. Makes several contacts with the 16S rRNA in the 70S ribosome. The chain is Large ribosomal subunit protein uL2 from Metamycoplasma arthritidis (strain 158L3-1) (Mycoplasma arthritidis).